The following is a 417-amino-acid chain: Tyrosine aminotransferase (417 aa).

N6-(pyridoxal phosphate)lysine is present on Lys-249.

This sequence belongs to the class-I pyridoxal-phosphate-dependent aminotransferase family. As to quaternary structure, homodimer. Requires pyridoxal 5'-phosphate as cofactor.

It carries out the reaction L-tyrosine + 2-oxoglutarate = 3-(4-hydroxyphenyl)pyruvate + L-glutamate. It functions in the pathway amino-acid degradation; L-phenylalanine degradation; acetoacetate and fumarate from L-phenylalanine: step 2/6. In terms of biological role, transaminase involved in tyrosine breakdown. Converts tyrosine to p-hydroxyphenylpyruvate. Has much lower affinity and transaminase activity towards phenylalanine. The chain is Tyrosine aminotransferase (tat) from Dictyostelium discoideum (Social amoeba).